The chain runs to 155 residues: uncharacterized protein (155 aa).

2 disordered regions span residues Arg-24–Lys-63 and Lys-80–Glu-155. A Phosphoserine modification is found at Ser-50. Position 108 is an N6-acetyllysine (Lys-108). The segment covering Lys-128–Ser-147 has biased composition (polar residues). Residues Ser-130, Ser-147, and Ser-150 each carry the phosphoserine modification.

This is an uncharacterized protein from Mus musculus (Mouse).